Here is a 250-residue protein sequence, read N- to C-terminus: Ubiquinone/menaquinone biosynthesis C-methyltransferase UbiE (250 aa).

S-adenosyl-L-methionine contacts are provided by residues Thr-74, Asp-94, 122 to 123 (DA), and Ser-139.

The protein belongs to the class I-like SAM-binding methyltransferase superfamily. MenG/UbiE family.

The catalysed reaction is a 2-demethylmenaquinol + S-adenosyl-L-methionine = a menaquinol + S-adenosyl-L-homocysteine + H(+). It catalyses the reaction a 2-methoxy-6-(all-trans-polyprenyl)benzene-1,4-diol + S-adenosyl-L-methionine = a 5-methoxy-2-methyl-3-(all-trans-polyprenyl)benzene-1,4-diol + S-adenosyl-L-homocysteine + H(+). Its pathway is quinol/quinone metabolism; menaquinone biosynthesis; menaquinol from 1,4-dihydroxy-2-naphthoate: step 2/2. It participates in cofactor biosynthesis; ubiquinone biosynthesis. Functionally, methyltransferase required for the conversion of demethylmenaquinol (DMKH2) to menaquinol (MKH2) and the conversion of 2-polyprenyl-6-methoxy-1,4-benzoquinol (DDMQH2) to 2-polyprenyl-3-methyl-6-methoxy-1,4-benzoquinol (DMQH2). The chain is Ubiquinone/menaquinone biosynthesis C-methyltransferase UbiE from Ruegeria sp. (strain TM1040) (Silicibacter sp.).